Here is a 137-residue protein sequence, read N- to C-terminus: ATP synthase epsilon chain (137 aa).

Belongs to the ATPase epsilon chain family. As to quaternary structure, F-type ATPases have 2 components, CF(1) - the catalytic core - and CF(0) - the membrane proton channel. CF(1) has five subunits: alpha(3), beta(3), gamma(1), delta(1), epsilon(1). CF(0) has three main subunits: a, b and c.

It is found in the cell membrane. Produces ATP from ADP in the presence of a proton gradient across the membrane. The sequence is that of ATP synthase epsilon chain from Syntrophomonas wolfei subsp. wolfei (strain DSM 2245B / Goettingen).